Here is a 513-residue protein sequence, read N- to C-terminus: Putative zinc finger CCCH domain-containing protein 51 (513 aa).

The segment at 155 to 180 (SMPRNSPNAGRNLVGHPHSSSKSSSK) is disordered. Residues 170–180 (HPHSSSKSSSK) show a composition bias toward low complexity. The segment at 176–204 (KSSSKPCHFHFFRGYCKKGVNCQFFHGSV) adopts a C3H1-type zinc-finger fold. Positions 218-299 (SLSKLDMEIR…HGQYHVVLVE (82 aa)) constitute an HTH OST-type domain. An RRM domain is found at 325-411 (NQIYMTFPVH…SELRMTWLKS (87 aa)).

This Oryza sativa subsp. japonica (Rice) protein is Putative zinc finger CCCH domain-containing protein 51.